A 310-amino-acid polypeptide reads, in one-letter code: p-hydroxybenzoic acid efflux pump subunit AaeA (310 aa).

Residues 12–32 traverse the membrane as a helical segment; sequence AITLVLVILAFIAIFRAWVYY.

Belongs to the membrane fusion protein (MFP) (TC 8.A.1) family.

It is found in the cell inner membrane. In terms of biological role, forms an efflux pump with AaeB. This Citrobacter koseri (strain ATCC BAA-895 / CDC 4225-83 / SGSC4696) protein is p-hydroxybenzoic acid efflux pump subunit AaeA.